A 471-amino-acid polypeptide reads, in one-letter code: Tryptophanase (471 aa).

Lysine 5, lysine 115, and lysine 156 each carry N6-acetyllysine. N6-(pyridoxal phosphate)lysine is present on lysine 270. Lysine 450 is modified (N6-acetyllysine).

Belongs to the beta-eliminating lyase family. Homotetramer. Pyridoxal 5'-phosphate serves as cofactor.

The catalysed reaction is L-tryptophan + H2O = indole + pyruvate + NH4(+). The protein operates within amino-acid degradation; L-tryptophan degradation via pyruvate pathway; indole and pyruvate from L-tryptophan: step 1/1. The sequence is that of Tryptophanase (tnaA) from Escherichia coli O157:H7.